A 702-amino-acid polypeptide reads, in one-letter code: Methionine--tRNA ligase (702 aa).

Positions 14-24 match the 'HIGH' region motif; that stretch reads PYANGPVHLGH. 4 residues coordinate Zn(2+): C146, C149, C159, and C162. The 'KMSKS' region motif lies at 344–348; the sequence is KFSKS. K347 lines the ATP pocket. The 102-residue stretch at 601–702 folds into the tRNA-binding domain; it reads EFLKVDLRVA…GKEINGKKIQ (102 aa).

The protein belongs to the class-I aminoacyl-tRNA synthetase family. MetG type 1 subfamily. In terms of assembly, homodimer. Zn(2+) serves as cofactor.

The protein resides in the cytoplasm. The catalysed reaction is tRNA(Met) + L-methionine + ATP = L-methionyl-tRNA(Met) + AMP + diphosphate. Functionally, is required not only for elongation of protein synthesis but also for the initiation of all mRNA translation through initiator tRNA(fMet) aminoacylation. The protein is Methionine--tRNA ligase of Chlorobium phaeobacteroides (strain DSM 266 / SMG 266 / 2430).